A 352-amino-acid chain; its full sequence is Phosphoribosylformylglycinamidine cyclo-ligase (352 aa).

Belongs to the AIR synthase family.

The protein resides in the cytoplasm. It catalyses the reaction 2-formamido-N(1)-(5-O-phospho-beta-D-ribosyl)acetamidine + ATP = 5-amino-1-(5-phospho-beta-D-ribosyl)imidazole + ADP + phosphate + H(+). The protein operates within purine metabolism; IMP biosynthesis via de novo pathway; 5-amino-1-(5-phospho-D-ribosyl)imidazole from N(2)-formyl-N(1)-(5-phospho-D-ribosyl)glycinamide: step 2/2. The chain is Phosphoribosylformylglycinamidine cyclo-ligase from Pseudomonas savastanoi pv. phaseolicola (strain 1448A / Race 6) (Pseudomonas syringae pv. phaseolicola (strain 1448A / Race 6)).